Consider the following 843-residue polypeptide: Vacuolar membrane protease (843 aa).

Topologically, residues 1–16 (MTNSRRHIFERICAKA) are cytoplasmic. The chain crosses the membrane as a helical span at residues 17–37 (FQSSLTCSIFGFTVLLILYLL). Topologically, residues 38 to 347 (DWKRIAQVPG…LAFGKYWQLN (310 aa)) are vacuolar. 3 N-linked (GlcNAc...) asparagine glycosylation sites follow: N96, N109, and N117. H147 and D159 together coordinate Zn(2+). The Proton acceptor role is filled by E191. Residue E192 coordinates Zn(2+). Residue N209 is glycosylated (N-linked (GlcNAc...) asparagine). E217 contributes to the Zn(2+) binding site. Residue N275 is glycosylated (N-linked (GlcNAc...) asparagine). H292 contacts Zn(2+). A glycan (N-linked (GlcNAc...) asparagine) is linked at N322. A helical membrane pass occupies residues 348 to 368 (LPIYQVLNIIFAVICPIVLLL). Residues 369–386 (TLIRFPSLYEQLKKPRYT) lie on the Cytoplasmic side of the membrane. Residues 387 to 407 (VCFVVSCIFVSIFDTLTVLLL) form a helical membrane-spanning segment. Residues 408–417 (TWINPYVINS) lie on the Vacuolar side of the membrane. Residues 418 to 438 (HTGLILALFYLTNLIALAFSF) traverse the membrane as a helical segment. Over 439–456 (RAAATHSKLSSEDLSSIE) the chain is Cytoplasmic. A helical transmembrane segment spans residues 457–477 (IVFIWYAQILWYLVFIVSVIL). Residues 478–484 (SIYFQLG) lie on the Vacuolar side of the membrane. Residues 485-505 (STYWVTLSYLCTFTCCIMTII) form a helical membrane-spanning segment. Residues 506–566 (RINYFVDNVV…NRAHVKLIDN (61 aa)) lie on the Cytoplasmic side of the membrane. The chain crosses the membrane as a helical span at residues 567–587 (IWTVIYFIFNVPFPVFLCYDI). The Vacuolar portion of the chain corresponds to 588–608 (LVETILPAGSQTLTDSVFSSK). The chain crosses the membrane as a helical span at residues 609–629 (LYKLVIFVVFLSLVNSGPFIF). Residues 630–636 (RALSKKS) lie on the Cytoplasmic side of the membrane. The helical transmembrane segment at 637 to 657 (LAVLTMLWITLFVQALSVNPF) threads the bilayer. The Vacuolar segment spans residues 658–843 (TESAPLKLSF…LLKVKSSIVI (186 aa)). 5 N-linked (GlcNAc...) asparagine glycosylation sites follow: N677, N703, N707, N754, and N788.

This sequence belongs to the peptidase M28 family. Zn(2+) is required as a cofactor.

It localises to the membrane. The protein localises to the vacuole membrane. May be involved in vacuolar sorting and osmoregulation. The polypeptide is Vacuolar membrane protease (Schizosaccharomyces pombe (strain 972 / ATCC 24843) (Fission yeast)).